The following is a 212-amino-acid chain: ATP-dependent Clp protease proteolytic subunit (212 aa).

Ser-113 serves as the catalytic Nucleophile. Residue His-138 is part of the active site.

This sequence belongs to the peptidase S14 family. As to quaternary structure, fourteen ClpP subunits assemble into 2 heptameric rings which stack back to back to give a disk-like structure with a central cavity, resembling the structure of eukaryotic proteasomes.

It is found in the cytoplasm. The enzyme catalyses Hydrolysis of proteins to small peptides in the presence of ATP and magnesium. alpha-casein is the usual test substrate. In the absence of ATP, only oligopeptides shorter than five residues are hydrolyzed (such as succinyl-Leu-Tyr-|-NHMec, and Leu-Tyr-Leu-|-Tyr-Trp, in which cleavage of the -Tyr-|-Leu- and -Tyr-|-Trp bonds also occurs).. Functionally, cleaves peptides in various proteins in a process that requires ATP hydrolysis. Has a chymotrypsin-like activity. Plays a major role in the degradation of misfolded proteins. The protein is ATP-dependent Clp protease proteolytic subunit of Saccharophagus degradans (strain 2-40 / ATCC 43961 / DSM 17024).